The following is a 256-amino-acid chain: 5'-nucleotidase SurE (256 aa).

A divalent metal cation-binding residues include D8, D9, S40, and N92.

The protein belongs to the SurE nucleotidase family. Requires a divalent metal cation as cofactor.

It localises to the cytoplasm. It catalyses the reaction a ribonucleoside 5'-phosphate + H2O = a ribonucleoside + phosphate. In terms of biological role, nucleotidase that shows phosphatase activity on nucleoside 5'-monophosphates. In Allorhizobium ampelinum (strain ATCC BAA-846 / DSM 112012 / S4) (Agrobacterium vitis (strain S4)), this protein is 5'-nucleotidase SurE.